The primary structure comprises 899 residues: Nuclear factor NF-kappa-B p100 subunit (899 aa).

Phosphoserine is present on residues Ser-23 and Ser-161. The RHD domain maps to 35 to 224 (ADGPYLVIVE…QPIHDSKSPG (190 aa)). Positions 337 to 341 (RKRRK) match the Nuclear localization signal motif. The interval 346-377 (FSQPFGGGSHMGGGSGGSAGGYGGAGGGGSLG) is GRR. Positions 403–434 (GGAQMAGSRRDTDAGEGAEEPRTPPEAPQGEP) are disordered. Over residues 410–425 (SRRDTDAGEGAEEPRT) the composition is skewed to basic and acidic residues. Thr-425 bears the Phosphothreonine mark. ANK repeat units lie at residues 487-516 (NGDT…HAQY), 526-555 (LHQT…DPTL), 559-590 (HGDS…HAVP), 599-628 (EGLY…EVEA), 633-663 (GGRT…NVNA), and 667-696 (AGNT…DIHA). A disordered region spans residues 698 to 734 (NEEPLCPLPSPSTSGSDSDSEGPERDTQRNFRGHTPL). 3 positions are modified to phosphoserine: Ser-713, Ser-715, and Ser-717. One copy of the ANK 7 repeat lies at 729-755 (RGHTPLDLTCSTKVKTLLLNAAQNTTE). Positions 764–851 (AGPGLSLGDA…EGVRLLKGPE (88 aa)) constitute a Death domain. A Phosphoserine modification is found at Ser-812. Basic and acidic residues predominate over residues 851 to 865 (ETRDKLPSTEVKEDS). The tract at residues 851–899 (ETRDKLPSTEVKEDSAYGSQSVEQEAEKLCPPPEPPGGLCHGHPQPQVH) is disordered. Residue Lys-855 forms a Glycyl lysine isopeptide (Lys-Gly) (interchain with G-Cter in ubiquitin) linkage. Residues Ser-865 and Ser-869 each carry the phosphoserine; by MAP3K14 modification. The segment covering 887 to 899 (GGLCHGHPQPQVH) has biased composition (low complexity).

As to quaternary structure, component of the NF-kappa-B RelB-p52 complex. Homodimer; component of the NF-kappa-B p52-p52 complex. Component of the NF-kappa-B p65-p52 complex. Component of the NF-kappa-B p52-c-Rel complex. NFKB2/p52 interacts with NFKBIE. Component of a complex consisting of the NF-kappa-B p50-p50 homodimer and BCL3. Directly interacts with MEN1. In terms of processing, while translation occurs, the particular unfolded structure after the GRR repeat promotes the generation of p52 making it an acceptable substrate for the proteasome. This process is known as cotranslational processing. The processed form is active and the unprocessed form acts as an inhibitor (I kappa B-like), being able to form cytosolic complexes with NF-kappa B, trapping it in the cytoplasm. Complete folding of the region downstream of the GRR repeat precludes processing. Subsequent to MAP3K14-dependent serine phosphorylation, p100 polyubiquitination occurs then triggering its proteasome-dependent processing. Post-translationally, constitutive processing is tightly suppressed by its C-terminal processing inhibitory domain, named PID, which contains the death domain. In terms of processing, ubiquitinated by TRIM55; leading to processing by VCP and subsequent ubiquitin-dependent protein degradation by the proteasome. As to expression, highly expressed in lymph nodes and thymus.

It is found in the nucleus. Its subcellular location is the cytoplasm. In terms of biological role, NF-kappa-B is a pleiotropic transcription factor present in almost all cell types and is the endpoint of a series of signal transduction events that are initiated by a vast array of stimuli related to many biological processes such as inflammation, immunity, differentiation, cell growth, tumorigenesis and apoptosis. NF-kappa-B is a homo- or heterodimeric complex formed by the Rel-like domain-containing proteins RELA/p65, RELB, NFKB1/p105, NFKB1/p50, REL and NFKB2/p52. The dimers bind at kappa-B sites in the DNA of their target genes and the individual dimers have distinct preferences for different kappa-B sites that they can bind with distinguishable affinity and specificity. Different dimer combinations act as transcriptional activators or repressors, respectively. NF-kappa-B is controlled by various mechanisms of post-translational modification and subcellular compartmentalization as well as by interactions with other cofactors or corepressors. NF-kappa-B complexes are held in the cytoplasm in an inactive state complexed with members of the NF-kappa-B inhibitor (I-kappa-B) family. In a conventional activation pathway, I-kappa-B is phosphorylated by I-kappa-B kinases (IKKs) in response to different activators, subsequently degraded thus liberating the active NF-kappa-B complex which translocates to the nucleus. In a non-canonical activation pathway, the MAP3K14-activated CHUK/IKKA homodimer phosphorylates NFKB2/p100 associated with RelB, inducing its proteolytic processing to NFKB2/p52 and the formation of NF-kappa-B RelB-p52 complexes. The NF-kappa-B heterodimeric RelB-p52 complex is a transcriptional activator. The NF-kappa-B p52-p52 homodimer is a transcriptional repressor. NFKB2 appears to have dual functions such as cytoplasmic retention of attached NF-kappa-B proteins by p100 and generation of p52 by a cotranslational processing. The proteasome-mediated process ensures the production of both p52 and p100 and preserves their independent function. p52 binds to the kappa-B consensus sequence 5'-GGRNNYYCC-3', located in the enhancer region of genes involved in immune response and acute phase reactions. p52 and p100 are respectively the minor and major form; the processing of p100 being relatively poor. Isoform p49 is a subunit of the NF-kappa-B protein complex, which stimulates the HIV enhancer in synergy with p65. In concert with RELB, regulates the circadian clock by repressing the transcriptional activator activity of the CLOCK-BMAL1 heterodimer. The sequence is that of Nuclear factor NF-kappa-B p100 subunit (Nfkb2) from Mus musculus (Mouse).